Reading from the N-terminus, the 122-residue chain is Large ribosomal subunit protein uL14 (122 aa).

This sequence belongs to the universal ribosomal protein uL14 family. In terms of assembly, part of the 50S ribosomal subunit. Forms a cluster with proteins L3 and L19. In the 70S ribosome, L14 and L19 interact and together make contacts with the 16S rRNA in bridges B5 and B8.

Binds to 23S rRNA. Forms part of two intersubunit bridges in the 70S ribosome. This chain is Large ribosomal subunit protein uL14, found in Bifidobacterium animalis subsp. lactis (strain AD011).